The sequence spans 249 residues: Triosephosphate isomerase (249 aa).

A substrate-binding site is contributed by 9–11; sequence NWK. His95 serves as the catalytic Electrophile. The Proton acceptor role is filled by Glu166. Residues Gly172, Ser211, and 232-233 each bind substrate; that span reads GG.

The protein belongs to the triosephosphate isomerase family. Homodimer.

The protein resides in the cytoplasm. It carries out the reaction D-glyceraldehyde 3-phosphate = dihydroxyacetone phosphate. It functions in the pathway carbohydrate biosynthesis; gluconeogenesis. Its pathway is carbohydrate degradation; glycolysis; D-glyceraldehyde 3-phosphate from glycerone phosphate: step 1/1. Functionally, involved in the gluconeogenesis. Catalyzes stereospecifically the conversion of dihydroxyacetone phosphate (DHAP) to D-glyceraldehyde-3-phosphate (G3P). In Legionella pneumophila (strain Lens), this protein is Triosephosphate isomerase.